Here is a 375-residue protein sequence, read N- to C-terminus: cAMP-dependent protein kinase regulatory subunit (375 aa).

Positions 28-142 are dimerization and phosphorylation; that stretch reads RFCADYFNER…SLYKSVSHNF (115 aa). Positions 41 to 50 are enriched in basic and acidic residues; sequence REEADDDGPR. Positions 41–102 are disordered; the sequence is REEADDDGPR…EPAAPFTRRT (62 aa). Polar residues predominate over residues 64-82; that stretch reads GSSSRSTDGSLFRSSFADT. The span at 83–97 shows a compositional bias: low complexity; that stretch reads SSEGPGSASSEPAAP. Ser103 carries the phosphoserine modification. 3',5'-cyclic AMP-binding positions include 143–258, Glu208, Arg217, 261–375, Glu328, and Arg337; these read LFGN…FLKE and ILSD…DPTK.

It belongs to the cAMP-dependent kinase regulatory chain family. In terms of assembly, tetramer, composed of 2 regulatory (R) and 2 catalytic (C) subunits. In the presence of cAMP it dissociates into 2 active monomeric C subunits and an R dimer.

In Yarrowia lipolytica (strain CLIB 122 / E 150) (Yeast), this protein is cAMP-dependent protein kinase regulatory subunit (PKAR).